Reading from the N-terminus, the 380-residue chain is Ceramide synthase 2 (380 aa).

The Lumenal segment spans residues Met-1–Tyr-40. Asn-19 carries an N-linked (GlcNAc...) asparagine glycan. Residues Ile-41–Ala-61 traverse the membrane as a helical segment. The segment at Leu-67–Ser-128 is homeobox-like. The 202-residue stretch at Lys-131–Thr-332 folds into the TLC domain. The next 4 membrane-spanning stretches (helical) occupy residues Phe-140–Phe-160, Trp-181–Val-201, Gln-209–Ile-229, and Ile-264–Ile-284. Residues Tyr-291–Phe-300 carry the Last loop motif motif. The chain crosses the membrane as a helical span at residues Phe-304–Leu-324. Over Arg-325–Asp-380 the chain is Cytoplasmic. A disordered region spans residues Asp-338–Asp-380. Position 341 is a phosphoserine (Ser-341). Positions Glu-344–Glu-353 are enriched in acidic residues. Thr-346 carries the post-translational modification Phosphothreonine. Phosphoserine occurs at positions 348 and 349.

In terms of assembly, interacts with ATP6V0C, ASGR1, ASGR2 and SLC22A1/OCT1. Interacts with ELOV1, HSD17B12 and TECR. Interacts with NDUFS2. Interacts with PAQR4; the interaction regulates the stability and activity of CERS2 and is inhibited in presence of ceramides. Post-translationally, acetylated. Deacetylation by SIRT3 increases enzyme activity and promotes mitochondrial ceramide accumulation. Phosphorylated at the C-terminus by CK2, leading to increase the ceramide synthase activity. In terms of tissue distribution, expressed in kidney, liver, brain, heart, placenta and lung.

The protein localises to the endoplasmic reticulum membrane. The enzyme catalyses a very long-chain fatty acyl-CoA + a sphingoid base = an N-(very-long-chain fatty acyl)-sphingoid base + CoA + H(+). It catalyses the reaction docosanoyl-CoA + sphinganine = N-docosanoylsphinganine + CoA + H(+). It carries out the reaction tetracosanoyl-CoA + sphinganine = N-tetracosanoylsphinganine + CoA + H(+). The catalysed reaction is hexacosanoyl-CoA + sphinganine = N-hexacosanoylsphinganine + CoA + H(+). The enzyme catalyses (15Z)-tetracosenoyl-CoA + sphinganine = N-(15Z-tetracosenoyl)-sphinganine + CoA + H(+). It catalyses the reaction 2-hydroxytetracosanoyl-CoA + sphinganine = N-(2-hydroxytetracosanoyl)-sphinganine + CoA + H(+). It carries out the reaction 2-hydroxydocosanoyl-CoA + sphinganine = N-(2-hydroxydocosanoyl)-sphinganine + CoA + H(+). The catalysed reaction is 2-hydroxytetracosenoyl-CoA + sphinganine = N-(2-hydroxytetracosenoyl)-sphinganine + CoA + H(+). The enzyme catalyses tetracosenoyl-CoA + sphinganine = an N-tetracosenoylsphinganine + CoA + H(+). It catalyses the reaction hexacosenoyl-CoA + sphinganine = N-hexacosenoylsphinganine + CoA + H(+). It carries out the reaction tetracosanoyl-CoA + sphing-4-enine = N-tetracosanoyl-sphing-4-enine + CoA + H(+). The catalysed reaction is tetracosenoyl-CoA + sphing-4-enine = N-(tetracosenoyl)-sphing-4-enine + CoA + H(+). The enzyme catalyses heptadecasphing-4-enine + tetracosanoyl-CoA = N-tetracosanoyl-heptadecasphing-4-enine + CoA + H(+). It catalyses the reaction a fatty acyl-CoA + sphing-4-enine = an N-acylsphing-4-enine + CoA + H(+). It carries out the reaction sphing-4-enine + hexadecanoyl-CoA = N-hexadecanoylsphing-4-enine + CoA + H(+). The catalysed reaction is sphing-4-enine + octadecanoyl-CoA = N-octadecanoylsphing-4-enine + CoA + H(+). The enzyme catalyses eicosanoyl-CoA + sphing-4-enine = N-eicosanoyl-sphing-4-enine + CoA + H(+). It catalyses the reaction sphinganine + hexadecanoyl-CoA = N-hexadecanoylsphinganine + CoA + H(+). It carries out the reaction sphinganine + octadecanoyl-CoA = N-(octadecanoyl)-sphinganine + CoA + H(+). The catalysed reaction is sphinganine + (9Z)-octadecenoyl-CoA = N-(9Z-octadecenoyl)-sphinganine + CoA + H(+). The enzyme catalyses eicosanoyl-CoA + sphinganine = N-eicosanoylsphinganine + CoA + H(+). It participates in lipid metabolism; sphingolipid metabolism. With respect to regulation, ceramide synthase activity is inhibited by sphingosine-1-phosphate. Its function is as follows. Ceramide synthase that catalyzes the transfer of the acyl chain from acyl-CoA to a sphingoid base, with high selectivity toward very-long-chain fatty acyl-CoA (chain length C22-C27). N-acylates sphinganine and sphingosine bases to form dihydroceramides and ceramides in de novo synthesis and salvage pathways, respectively. Plays a non-redundant role in the synthesis of ceramides with very-long-chain fatty acids in kidney, liver and brain. Regulates the abundance of myelin-specific sphingolipids galactosylceramide and sulfatide that affects myelin sheath architecture and motor neuron functions. In Homo sapiens (Human), this protein is Ceramide synthase 2.